We begin with the raw amino-acid sequence, 452 residues long: MSLAVVILAAGKGTRMKSALPKVLHAVAGKPMVQHVVDAAASLEPANTVIVYGHGGEQVKASVTGEQVAWAEQAEQLGTGHAVAQAMPYVKEDMVLVLYGDVPLIRPETLKDFVATVDDSTLALMTLTLDDPNGYGRIVRDGQNNVQRIVEQKDASEAELSIQEINTGILACSRRFLEESLPKLSSNNAQGEYYLTDLIAMASQSGLNVQTLQPNEGWEVDGVNDRVQLARLERIYQQAQAETLMRDGVTLLDPSRLDIRGRVQIASDVIIDVNVILEGDVTIEEGVVIGPNCILRDANIGAGTVIEANTLIDGAIVGEHCQLGPYARLRPGTELADKAKIGNFVETKKSYIGEGSKVNHLTYIGDSKIGKGVNVGAGTITCNYDGANKFQTVLKDGAFIGSNSSLVAPVTIGVNATVGAGSTITKDVGDNGLAVARTQQRNVANWQRPKKG.

The segment at 1–226 (MSLAVVILAA…GWEVDGVNDR (226 aa)) is pyrophosphorylase. UDP-N-acetyl-alpha-D-glucosamine contacts are provided by residues 8 to 11 (LAAG), K22, Q73, 78 to 79 (GT), 99 to 101 (YGD), G136, E151, N166, and N224. Mg(2+) is bound at residue D101. Residue N224 coordinates Mg(2+). The tract at residues 227-247 (VQLARLERIYQQAQAETLMRD) is linker. The interval 248-452 (GVTLLDPSRL…VANWQRPKKG (205 aa)) is N-acetyltransferase. The UDP-N-acetyl-alpha-D-glucosamine site is built by R330 and K348. Residue H360 is the Proton acceptor of the active site. Positions 363 and 374 each coordinate UDP-N-acetyl-alpha-D-glucosamine. Residues A377, 383–384 (NY), S402, A420, and R437 each bind acetyl-CoA.

This sequence in the N-terminal section; belongs to the N-acetylglucosamine-1-phosphate uridyltransferase family. It in the C-terminal section; belongs to the transferase hexapeptide repeat family. Homotrimer. The cofactor is Mg(2+).

The protein localises to the cytoplasm. It carries out the reaction alpha-D-glucosamine 1-phosphate + acetyl-CoA = N-acetyl-alpha-D-glucosamine 1-phosphate + CoA + H(+). It catalyses the reaction N-acetyl-alpha-D-glucosamine 1-phosphate + UTP + H(+) = UDP-N-acetyl-alpha-D-glucosamine + diphosphate. It participates in nucleotide-sugar biosynthesis; UDP-N-acetyl-alpha-D-glucosamine biosynthesis; N-acetyl-alpha-D-glucosamine 1-phosphate from alpha-D-glucosamine 6-phosphate (route II): step 2/2. The protein operates within nucleotide-sugar biosynthesis; UDP-N-acetyl-alpha-D-glucosamine biosynthesis; UDP-N-acetyl-alpha-D-glucosamine from N-acetyl-alpha-D-glucosamine 1-phosphate: step 1/1. It functions in the pathway bacterial outer membrane biogenesis; LPS lipid A biosynthesis. Functionally, catalyzes the last two sequential reactions in the de novo biosynthetic pathway for UDP-N-acetylglucosamine (UDP-GlcNAc). The C-terminal domain catalyzes the transfer of acetyl group from acetyl coenzyme A to glucosamine-1-phosphate (GlcN-1-P) to produce N-acetylglucosamine-1-phosphate (GlcNAc-1-P), which is converted into UDP-GlcNAc by the transfer of uridine 5-monophosphate (from uridine 5-triphosphate), a reaction catalyzed by the N-terminal domain. The protein is Bifunctional protein GlmU of Alcanivorax borkumensis (strain ATCC 700651 / DSM 11573 / NCIMB 13689 / SK2).